A 271-amino-acid polypeptide reads, in one-letter code: Urease accessory protein UreD (271 aa).

The protein belongs to the UreD family. As to quaternary structure, ureD, UreF and UreG form a complex that acts as a GTP-hydrolysis-dependent molecular chaperone, activating the urease apoprotein by helping to assemble the nickel containing metallocenter of UreC. The UreE protein probably delivers the nickel.

Its subcellular location is the cytoplasm. In terms of biological role, required for maturation of urease via the functional incorporation of the urease nickel metallocenter. The sequence is that of Urease accessory protein UreD from Bacillus sp. (strain TB-90).